The following is a 567-amino-acid chain: Urease subunit alpha (567 aa).

In terms of domain architecture, Urease spans 129–567 (GGVDSHIHFI…LPLAQRYFLF (439 aa)). Ni(2+) contacts are provided by histidine 134, histidine 136, and lysine 217. Lysine 217 carries the post-translational modification N6-carboxylysine. Histidine 219 provides a ligand contact to substrate. Ni(2+)-binding residues include histidine 246 and histidine 272. Catalysis depends on histidine 320, which acts as the Proton donor. Aspartate 360 is a binding site for Ni(2+).

The protein belongs to the metallo-dependent hydrolases superfamily. Urease alpha subunit family. In terms of assembly, heterotrimer of UreA (gamma), UreB (beta) and UreC (alpha) subunits. Three heterotrimers associate to form the active enzyme. Ni cation is required as a cofactor. Post-translationally, carboxylation allows a single lysine to coordinate two nickel ions.

It localises to the cytoplasm. It catalyses the reaction urea + 2 H2O + H(+) = hydrogencarbonate + 2 NH4(+). It functions in the pathway nitrogen metabolism; urea degradation; CO(2) and NH(3) from urea (urease route): step 1/1. The protein is Urease subunit alpha of Pseudomonas putida (strain ATCC 47054 / DSM 6125 / CFBP 8728 / NCIMB 11950 / KT2440).